The primary structure comprises 180 residues: ATP-dependent protease subunit HslV (180 aa).

Residue T5 is part of the active site. Residues G161, C164, and T167 each contribute to the Na(+) site.

The protein belongs to the peptidase T1B family. HslV subfamily. In terms of assembly, a double ring-shaped homohexamer of HslV is capped on each side by a ring-shaped HslU homohexamer. The assembly of the HslU/HslV complex is dependent on binding of ATP.

Its subcellular location is the cytoplasm. It catalyses the reaction ATP-dependent cleavage of peptide bonds with broad specificity.. Its activity is regulated as follows. Allosterically activated by HslU binding. In terms of biological role, protease subunit of a proteasome-like degradation complex believed to be a general protein degrading machinery. This is ATP-dependent protease subunit HslV from Campylobacter jejuni subsp. jejuni serotype O:2 (strain ATCC 700819 / NCTC 11168).